Consider the following 275-residue polypeptide: Mitochondrial fission factor homolog A (275 aa).

Residues 1–255 (MAEVNRIHYE…ENKERAKREM (255 aa)) are Cytoplasmic-facing. A disordered region spans residues 100 to 171 (DFLEPEPAAN…PLISPEDSQN (72 aa)). A compositionally biased stretch (basic and acidic residues) spans 114 to 130 (PREEMKSHFRSRREQCR). Over residues 131 to 142 (SENSTMRRNGQI) the composition is skewed to polar residues. Positions 223–253 (LTDAASLRRQIIKLNRRLQLLEHENKERAKR) form a coiled coil. A helical; Anchor for type IV membrane protein transmembrane segment spans residues 256–273 (VMYSLTVAFWLVNSWIWL). At 274-275 (RR) the chain is on the extracellular side.

This sequence belongs to the Tango11 family.

The protein resides in the mitochondrion outer membrane. Its subcellular location is the peroxisome. Its function is as follows. Plays a role in mitochondrial and peroxisomal fission. Promotes the recruitment and association of the fission mediator dynamin-related protein 1 (DNM1L) to the mitochondrial surface. This chain is Mitochondrial fission factor homolog A, found in Danio rerio (Zebrafish).